Reading from the N-terminus, the 758-residue chain is 5-methyltetrahydropteroyltriglutamate--homocysteine methyltransferase (758 aa).

Residues 16-19 (RELK) and Lys116 each bind 5-methyltetrahydropteroyltri-L-glutamate. L-homocysteine is bound by residues 436–438 (IGS) and Glu489. L-methionine contacts are provided by residues 436–438 (IGS) and Glu489. 5-methyltetrahydropteroyltri-L-glutamate is bound by residues 520 to 521 (RC) and Trp566. Asp604 contacts L-homocysteine. Asp604 lines the L-methionine pocket. Glu610 is a 5-methyltetrahydropteroyltri-L-glutamate binding site. Residues His646, Cys648, and Glu670 each coordinate Zn(2+). The Proton donor role is filled by His699. A Zn(2+)-binding site is contributed by Cys731.

The protein belongs to the vitamin-B12 independent methionine synthase family. Requires Zn(2+) as cofactor.

The catalysed reaction is 5-methyltetrahydropteroyltri-L-glutamate + L-homocysteine = tetrahydropteroyltri-L-glutamate + L-methionine. The protein operates within amino-acid biosynthesis; L-methionine biosynthesis via de novo pathway; L-methionine from L-homocysteine (MetE route): step 1/1. Functionally, catalyzes the transfer of a methyl group from 5-methyltetrahydrofolate to homocysteine resulting in methionine formation. In Xylella fastidiosa (strain M12), this protein is 5-methyltetrahydropteroyltriglutamate--homocysteine methyltransferase.